The primary structure comprises 294 residues: Homeobox-leucine zipper protein ATHB-16 (294 aa).

Over residues 1–20 (MKRLSSSDSMCGLISTSTDE) the composition is skewed to polar residues. The interval 1-31 (MKRLSSSDSMCGLISTSTDEQSPRGYGSNYQ) is disordered. Residues 56-115 (LSEKKRRLKVDQVKALEKNFELENKLEPERKTKLAQELGLQPRQVAVWFQNRRARWKTKQ) constitute a DNA-binding region (homeobox). A leucine-zipper region spans residues 116 to 151 (LEKDYGVLKGQYDSLRHNFDSLRRDNDSLLQEISKI). A compositionally biased stretch (polar residues) spans 219–238 (SSDSCDSSAVLNDETSSDNG). The interval 219-241 (SSDSCDSSAVLNDETSSDNGRLT) is disordered.

The protein belongs to the HD-ZIP homeobox family. Class I subfamily. As to expression, widely expressed with a lower level in siliques.

It localises to the nucleus. Probable transcription factor that may function as a negative regulator of the flowering time response to photoperiod. May act to repress cell expansion during plant development. The chain is Homeobox-leucine zipper protein ATHB-16 (ATHB-16) from Arabidopsis thaliana (Mouse-ear cress).